The following is a 791-amino-acid chain: 1-phosphatidylinositol 4,5-bisphosphate phosphodiesterase delta-4 (791 aa).

In terms of domain architecture, PH spans 16–124 (LLMQKGTMMR…WMQGLQLLVG (109 aa)). The substrate binding stretch occupies residues 26 to 53 (KVRSKSWKKLRFFRLQDDGMTVWHARQA). EF-hand domains follow at residues 134–169 (RLDQ…MNVE), 170–205 (MDQE…LTQR), and 207–237 (EVQE…EQKE). Residues Asp-147, Asn-149, Asp-151, Arg-153, Glu-158, Asp-183, Ser-185, Ser-187, Thr-189, and Glu-194 each coordinate Ca(2+). A GBA motif is present at residues 213–243 (EKFSSDGQKLTLLEFVDFLQEEQKEGERASD). A PI-PLC X-box domain is found at 290–435 (QDMTQPLNHY…LRGKILVKGK (146 aa)). Residue His-305 is part of the active site. Residues Asn-306, Glu-335, and Asp-337 each coordinate Ca(2+). The active site involves His-350. Glu-384 is a binding site for Ca(2+). Substrate-binding residues include Lys-433, Lys-435, Ser-551, and Arg-578. A PI-PLC Y-box domain is found at 522–638 (LSALVVYLKA…GYVLKPDFLR (117 aa)). One can recognise a C2 domain in the interval 638–765 (RDAQSSFHPE…QGYRHIHLLS (128 aa)). Positions 679, 681, 705, 734, 735, and 736 each coordinate Ca(2+). Positions 760-763 (HIHL) match the PDZ-binding motif.

In terms of assembly, interacts with GRIP1. Interacts (via GBA motif) with guanine nucleotide-binding protein G(i) alpha subunit GNAI3 (inactive GDP-bound form); low-affinity interaction. It depends on Ca(2+) as a cofactor.

The protein localises to the membrane. It is found in the nucleus. The protein resides in the cytoplasm. It localises to the endoplasmic reticulum. It catalyses the reaction a 1,2-diacyl-sn-glycero-3-phospho-(1D-myo-inositol-4,5-bisphosphate) + H2O = 1D-myo-inositol 1,4,5-trisphosphate + a 1,2-diacyl-sn-glycerol + H(+). The enzyme catalyses a 1,2-diacyl-sn-glycero-3-phospho-(1D-myo-inositol) + H2O = 1D-myo-inositol 1-phosphate + a 1,2-diacyl-sn-glycerol + H(+). Hydrolyzes the phosphatidylinositol 4,5-bisphosphate (PIP2) to generate 2 second messenger molecules diacylglycerol (DAG) and inositol 1,4,5-trisphosphate (IP3). DAG mediates the activation of protein kinase C (PKC), while IP3 releases Ca(2+) from intracellular stores. Required for acrosome reaction in sperm during fertilization, probably by acting as an important enzyme for intracellular Ca(2+) mobilization in the zona pellucida-induced acrosome reaction. May play a role in cell growth. Modulates the liver regeneration in cooperation with nuclear PKC. Overexpression up-regulates the Erk signaling pathway and proliferation. The chain is 1-phosphatidylinositol 4,5-bisphosphate phosphodiesterase delta-4 (PLCD4) from Bos taurus (Bovine).